We begin with the raw amino-acid sequence, 242 residues long: UDP-2,3-diacylglucosamine hydrolase (242 aa).

Mn(2+) is bound by residues Asp9, His11, Asp42, Asn79, and His114. Position 79-80 (79-80 (NR)) interacts with substrate. Positions 122, 160, 164, 167, and 195 each coordinate substrate. 2 residues coordinate Mn(2+): His195 and His197.

Belongs to the LpxH family. Mn(2+) is required as a cofactor.

Its subcellular location is the cell inner membrane. It carries out the reaction UDP-2-N,3-O-bis[(3R)-3-hydroxytetradecanoyl]-alpha-D-glucosamine + H2O = 2-N,3-O-bis[(3R)-3-hydroxytetradecanoyl]-alpha-D-glucosaminyl 1-phosphate + UMP + 2 H(+). It functions in the pathway glycolipid biosynthesis; lipid IV(A) biosynthesis; lipid IV(A) from (3R)-3-hydroxytetradecanoyl-[acyl-carrier-protein] and UDP-N-acetyl-alpha-D-glucosamine: step 4/6. In terms of biological role, hydrolyzes the pyrophosphate bond of UDP-2,3-diacylglucosamine to yield 2,3-diacylglucosamine 1-phosphate (lipid X) and UMP by catalyzing the attack of water at the alpha-P atom. Involved in the biosynthesis of lipid A, a phosphorylated glycolipid that anchors the lipopolysaccharide to the outer membrane of the cell. The sequence is that of UDP-2,3-diacylglucosamine hydrolase from Shewanella loihica (strain ATCC BAA-1088 / PV-4).